The sequence spans 89 residues: Acylphosphatase (89 aa).

One can recognise an Acylphosphatase-like domain in the interval 3–89 (CKRWILYGRV…GNYGSFHIEY (87 aa)). Catalysis depends on residues Arg18 and Asn36.

Belongs to the acylphosphatase family.

The enzyme catalyses an acyl phosphate + H2O = a carboxylate + phosphate + H(+). This chain is Acylphosphatase (acyP), found in Petrotoga mobilis (strain DSM 10674 / SJ95).